The sequence spans 297 residues: Protease HtpX homolog (297 aa).

A run of 2 helical transmembrane segments spans residues 14–34 and 39–59; these read IFLI…AGYL and YQFG…SMIF. H143 lines the Zn(2+) pocket. Residue E144 is part of the active site. Zn(2+) is bound at residue H147. 2 helical membrane passes run 153–173 and 196–216; these read IRIS…ASMG and IVFL…ASMV. E225 lines the Zn(2+) pocket.

Belongs to the peptidase M48B family. Zn(2+) serves as cofactor.

Its subcellular location is the cell membrane. The chain is Protease HtpX homolog from Streptococcus uberis (strain ATCC BAA-854 / 0140J).